We begin with the raw amino-acid sequence, 344 residues long: Nuclear distribution protein nudE-like 1-B (344 aa).

The stretch at 26 to 189 forms a coiled coil; sequence YKKSCHDAQE…ELAVRERTSD (164 aa).

It belongs to the nudE family. In terms of processing, phosphorylated in mitosis.

The protein localises to the cytoplasm. It is found in the cytoskeleton. The protein resides in the microtubule organizing center. It localises to the centrosome. Its subcellular location is the spindle. Functionally, required for organization of the cellular microtubule array and microtubule anchoring at the centrosome. Positively regulates the activity of the minus-end directed microtubule motor protein dynein. May enhance dynein-mediated microtubule sliding by targeting dynein to the microtubule plus end. The chain is Nuclear distribution protein nudE-like 1-B (ndel1b) from Danio rerio (Zebrafish).